The primary structure comprises 488 residues: Malonate-semialdehyde dehydrogenase (488 aa).

NAD(+) contacts are provided by Ala-150, Phe-152, Lys-176, Glu-179, Arg-180, Ser-229, and Thr-251. Catalysis depends on Cys-284, which acts as the Nucleophile. Glu-382 is an NAD(+) binding site.

It belongs to the aldehyde dehydrogenase family. IolA subfamily. In terms of assembly, homotetramer.

The enzyme catalyses 3-oxopropanoate + NAD(+) + CoA + H2O = hydrogencarbonate + acetyl-CoA + NADH + H(+). The catalysed reaction is 2-methyl-3-oxopropanoate + NAD(+) + CoA + H2O = propanoyl-CoA + hydrogencarbonate + NADH + H(+). Its pathway is polyol metabolism; myo-inositol degradation into acetyl-CoA; acetyl-CoA from myo-inositol: step 7/7. Catalyzes the oxidation of malonate semialdehyde (MSA) and methylmalonate semialdehyde (MMSA) into acetyl-CoA and propanoyl-CoA, respectively. Is involved in a myo-inositol catabolic pathway. Bicarbonate, and not CO2, is the end-product of the enzymatic reaction. In Listeria monocytogenes serotype 4b (strain CLIP80459), this protein is Malonate-semialdehyde dehydrogenase.